Reading from the N-terminus, the 212-residue chain is MQAFTTLDGLVVPLDRANVDTDAIIPKQFLKSIKRAGFGPNLFDEWRYLDHGEPGMDPATRQPNPAFVLNLPRYAGASVLLARDNFGCGSSREHAPWALEDYGIRAIIAPSFADIFYNNCFKNGILPIVLDAAAVDRLFGECEASAGYRLKIDLEQQTVTTPGGEVLRFEVDAGRKHRLLNGLDDIGLTLLQADKIKAYEARRRQEAPWLFA.

This sequence belongs to the LeuD family. LeuD type 1 subfamily. Heterodimer of LeuC and LeuD.

The catalysed reaction is (2R,3S)-3-isopropylmalate = (2S)-2-isopropylmalate. The protein operates within amino-acid biosynthesis; L-leucine biosynthesis; L-leucine from 3-methyl-2-oxobutanoate: step 2/4. Functionally, catalyzes the isomerization between 2-isopropylmalate and 3-isopropylmalate, via the formation of 2-isopropylmaleate. This chain is 3-isopropylmalate dehydratase small subunit, found in Thiobacillus denitrificans (strain ATCC 25259 / T1).